The sequence spans 379 residues: Chaperone protein DnaJ (379 aa).

Positions 5-70 constitute a J domain; sequence DYYEVLGVAK…QKRAAYDQYG (66 aa). Residues 139 to 217 form a CR-type zinc finger; the sequence is GYDTQIRVPS…CHGAGKVKET (79 aa). The Zn(2+) site is built by Cys152, Cys155, Cys169, Cys172, Cys191, Cys194, Cys205, and Cys208. CXXCXGXG motif repeat units lie at residues 152–159, 169–176, 191–198, and 205–212; these read CEICHGSG, CPTCSGSG, CPKCHGTG, and CGHCHGAG.

Belongs to the DnaJ family. As to quaternary structure, homodimer. Zn(2+) is required as a cofactor.

It localises to the cytoplasm. Its function is as follows. Participates actively in the response to hyperosmotic and heat shock by preventing the aggregation of stress-denatured proteins and by disaggregating proteins, also in an autonomous, DnaK-independent fashion. Unfolded proteins bind initially to DnaJ; upon interaction with the DnaJ-bound protein, DnaK hydrolyzes its bound ATP, resulting in the formation of a stable complex. GrpE releases ADP from DnaK; ATP binding to DnaK triggers the release of the substrate protein, thus completing the reaction cycle. Several rounds of ATP-dependent interactions between DnaJ, DnaK and GrpE are required for fully efficient folding. Also involved, together with DnaK and GrpE, in the DNA replication of plasmids through activation of initiation proteins. The polypeptide is Chaperone protein DnaJ (Paraburkholderia phytofirmans (strain DSM 17436 / LMG 22146 / PsJN) (Burkholderia phytofirmans)).